The following is a 578-amino-acid chain: GPI-anchor transamidase component PIGT (578 aa).

The signal sequence occupies residues 1–21 (MAAAMPLALLVLLLLGPGGWC). Residues 22 to 525 (LAEPPRDSLR…NLPTPDFSMP (504 aa)) lie on the Lumenal side of the membrane. An N-linked (GlcNAc...) asparagine glycan is attached at asparagine 164. 2 disulfide bridges follow: cysteine 195–cysteine 272 and cysteine 226–cysteine 231. N-linked (GlcNAc...) asparagine glycosylation is found at asparagine 291 and asparagine 327. A 2-acyl-6-[6-phosphoethanolamine-alpha-D-mannosyl-(1-&gt;2)-6-phosphoethanolamine-alpha-D-mannosyl-(1-&gt;6)-2-phosphoethanolamine-alpha-D-mannosyl-(1-&gt;4)-alpha-D-glucosaminyl]-1-(1-radyl,2-acyl-sn-glycero-3-phospho)-1D-myo-inositol-binding residues include asparagine 461, aspartate 521, serine 523, and asparagine 527. The chain crosses the membrane as a helical span at residues 526-548 (YNVICLTCTVVAVCYGSFYNLLT). Topologically, residues 549-578 (RTFHIEEPRTGGLAKRLANLIRRARGVPPL) are cytoplasmic.

It belongs to the PIGT family. As to quaternary structure, heteropentamer. Part of the GPI-anchor transamidase complex, consisting of PIGK, PIGT, PIGS, PIGU and GAA1. The disulfide bond between PIGK/GPI8 and PIGT is important for normal enzyme activity.

Its subcellular location is the endoplasmic reticulum membrane. Its pathway is glycolipid biosynthesis; glycosylphosphatidylinositol-anchor biosynthesis. In terms of biological role, component of the glycosylphosphatidylinositol-anchor (GPI-anchor) transamidase (GPI-T) complex that catalyzes the formation of the linkage between a proprotein and a GPI-anchor and participates in GPI anchored protein biosynthesis. May play a crucial role in GPI-T complex assembly in the luminal layer. Binds GPI-anchor. The protein is GPI-anchor transamidase component PIGT of Homo sapiens (Human).